Consider the following 377-residue polypeptide: Nitric oxide reductase FlRd-NAD(+) reductase (377 aa).

This sequence belongs to the FAD-dependent oxidoreductase family. The cofactor is FAD.

Its subcellular location is the cytoplasm. The enzyme catalyses 2 reduced [nitric oxide reductase rubredoxin domain] + NAD(+) + H(+) = 2 oxidized [nitric oxide reductase rubredoxin domain] + NADH. The protein operates within nitrogen metabolism; nitric oxide reduction. Functionally, one of at least two accessory proteins for anaerobic nitric oxide (NO) reductase. Reduces the rubredoxin moiety of NO reductase. This is Nitric oxide reductase FlRd-NAD(+) reductase (norW) from Shigella boydii serotype 4 (strain Sb227).